Reading from the N-terminus, the 229-residue chain is Sugar fermentation stimulation protein homolog (229 aa).

It belongs to the SfsA family.

In Clostridium novyi (strain NT), this protein is Sugar fermentation stimulation protein homolog.